A 239-amino-acid chain; its full sequence is Phosphoribosylaminoimidazole-succinocarboxamide synthase (239 aa).

The protein belongs to the SAICAR synthetase family.

The enzyme catalyses 5-amino-1-(5-phospho-D-ribosyl)imidazole-4-carboxylate + L-aspartate + ATP = (2S)-2-[5-amino-1-(5-phospho-beta-D-ribosyl)imidazole-4-carboxamido]succinate + ADP + phosphate + 2 H(+). Its pathway is purine metabolism; IMP biosynthesis via de novo pathway; 5-amino-1-(5-phospho-D-ribosyl)imidazole-4-carboxamide from 5-amino-1-(5-phospho-D-ribosyl)imidazole-4-carboxylate: step 1/2. This chain is Phosphoribosylaminoimidazole-succinocarboxamide synthase, found in Bacillus cytotoxicus (strain DSM 22905 / CIP 110041 / 391-98 / NVH 391-98).